The sequence spans 88 residues: MASSDKAFKLDIVTPQKLFFSGEVTSVIAPGLDGLFQIMKGHAPLLAALKSGKVRLSLSDKSEDSFQIEGGFFEVSGNKAILLTEDVS.

The protein belongs to the ATPase epsilon chain family. In terms of assembly, F-type ATPases have 2 components, CF(1) - the catalytic core - and CF(0) - the membrane proton channel. CF(1) has five subunits: alpha(3), beta(3), gamma(1), delta(1), epsilon(1). CF(0) has three main subunits: a, b and c.

It is found in the cell inner membrane. Functionally, produces ATP from ADP in the presence of a proton gradient across the membrane. In Chlorobium limicola, this protein is ATP synthase epsilon chain (atpC).